A 194-amino-acid chain; its full sequence is GTP cyclohydrolase 1 (194 aa).

3 residues coordinate Zn(2+): cysteine 83, histidine 86, and cysteine 155.

It belongs to the GTP cyclohydrolase I family. In terms of assembly, homomer.

It catalyses the reaction GTP + H2O = 7,8-dihydroneopterin 3'-triphosphate + formate + H(+). It participates in cofactor biosynthesis; 7,8-dihydroneopterin triphosphate biosynthesis; 7,8-dihydroneopterin triphosphate from GTP: step 1/1. This chain is GTP cyclohydrolase 1, found in Streptococcus pyogenes serotype M49 (strain NZ131).